Reading from the N-terminus, the 184-residue chain is MPNTQSPYNAFAMLLSSNGHPVTPAELHGLLIGRSCAGAGFDADAWLADAAQLLEIEPGDSVRNALVGLQEMVKGELTSDDMAIVLLLPTDDAALSDRATALGQWCQGFVTGFGLNAGGKDLSDEAKEVLQDLVAISQVQEALEESEDGESDYMEVMEYLRVAPLLLFSELAKPAAPAPKPSLH.

The protein belongs to the UPF0149 family.

The sequence is that of UPF0149 protein PP_5201 from Pseudomonas putida (strain ATCC 47054 / DSM 6125 / CFBP 8728 / NCIMB 11950 / KT2440).